A 222-amino-acid chain; its full sequence is Large ribosomal subunit protein uL4 (222 aa).

Positions 50–72 (TRGRSEVSHSTRKPFRQKGTGNA) are disordered.

Belongs to the universal ribosomal protein uL4 family. In terms of assembly, part of the 50S ribosomal subunit.

In terms of biological role, one of the primary rRNA binding proteins, this protein initially binds near the 5'-end of the 23S rRNA. It is important during the early stages of 50S assembly. It makes multiple contacts with different domains of the 23S rRNA in the assembled 50S subunit and ribosome. Forms part of the polypeptide exit tunnel. The polypeptide is Large ribosomal subunit protein uL4 (Chlamydia muridarum (strain MoPn / Nigg)).